The chain runs to 530 residues: Phosphoenolpyruvate carboxykinase (ATP) (530 aa).

Arg60, Tyr195, and Lys201 together coordinate substrate. ATP is bound by residues Lys201, His221, and Gly237–Thr245. Lys201 and His221 together coordinate Mn(2+). Residue Asp258 participates in Mn(2+) binding. Glu286, Arg324, and Ser449 together coordinate ATP. Residue Arg324 participates in substrate binding.

This sequence belongs to the phosphoenolpyruvate carboxykinase (ATP) family. Mn(2+) serves as cofactor.

It localises to the cytoplasm. It carries out the reaction oxaloacetate + ATP = phosphoenolpyruvate + ADP + CO2. Its pathway is carbohydrate biosynthesis; gluconeogenesis. Functionally, involved in the gluconeogenesis. Catalyzes the conversion of oxaloacetate (OAA) to phosphoenolpyruvate (PEP) through direct phosphoryl transfer between the nucleoside triphosphate and OAA. The protein is Phosphoenolpyruvate carboxykinase (ATP) of Geotalea uraniireducens (strain Rf4) (Geobacter uraniireducens).